A 333-amino-acid chain; its full sequence is MSPTGTPATPALRHRTVLLDEAVDALVWRPDGVYVDGTFGRGGHSRAVLARLGPDGALVAFDKDPAAIAEAGTIKDARFSIEHASFAAMAERLSGRGHVAGVLLDLGISSPQIDEAARGFSFRFEGPLDMRMDTTRGITAAQWLAQADEQDIARVIRDYGEERFAVQIAKAIVARRSEPGDGGPIATTADLAALVAKAVKTREKGQDPATRTFQALRIHVNQELEDLERGLKAAYELLQVGGRLVVISFHSLEDRIVKRFMAAHARPQQDADPALRRAPLRAADLPQPTLRLLGRYKPGPEEVAANPRARSAVMRVAEKLAPAATTAGGGARA.

S-adenosyl-L-methionine is bound by residues 42–44 (GGH), aspartate 62, phenylalanine 86, aspartate 105, and glutamine 112.

Belongs to the methyltransferase superfamily. RsmH family.

It is found in the cytoplasm. The catalysed reaction is cytidine(1402) in 16S rRNA + S-adenosyl-L-methionine = N(4)-methylcytidine(1402) in 16S rRNA + S-adenosyl-L-homocysteine + H(+). Its function is as follows. Specifically methylates the N4 position of cytidine in position 1402 (C1402) of 16S rRNA. The sequence is that of Ribosomal RNA small subunit methyltransferase H from Cupriavidus necator (strain ATCC 17699 / DSM 428 / KCTC 22496 / NCIMB 10442 / H16 / Stanier 337) (Ralstonia eutropha).